We begin with the raw amino-acid sequence, 305 residues long: Putative ABC transporter molybdenum-binding protein HVO_B0369 (305 aa).

Positions 1–40 (MNPDSAAGRSSRRAFLAAVGGVAAGGLTATAGCLGRGEEA) form a signal peptide, tat-type signal.

This sequence belongs to the bacterial solute-binding protein 1 family. WtpA subfamily. As to quaternary structure, the complex is composed of two ATP-binding proteins, two transmembrane proteins (HVO_B0370) and a solute-binding protein (HVO_B0369). In terms of processing, predicted to be exported by the Tat system. The position of the signal peptide cleavage has not been experimentally proven.

In terms of biological role, part of an ABC transporter complex involved in molybdenum import. This is Putative ABC transporter molybdenum-binding protein HVO_B0369 from Haloferax volcanii (strain ATCC 29605 / DSM 3757 / JCM 8879 / NBRC 14742 / NCIMB 2012 / VKM B-1768 / DS2) (Halobacterium volcanii).